Here is a 379-residue protein sequence, read N- to C-terminus: uncharacterized protein (379 aa).

Disordered regions lie at residues 1–20 (MLPQNSQVVHGVQDGPPVGP), 227–290 (VSQR…LQGH), and 331–371 (PGCA…RAGH). The segment covering 7–20 (QVVHGVQDGPPVGP) has biased composition (low complexity). The span at 249-261 (GCKDPRVRKEPGR) shows a compositional bias: basic and acidic residues.

This is an uncharacterized protein from Dryophytes versicolor (chameleon treefrog).